The primary structure comprises 309 residues: Porphobilinogen deaminase (309 aa).

An S-(dipyrrolylmethanemethyl)cysteine modification is found at cysteine 241.

It belongs to the HMBS family. Monomer. Dipyrromethane serves as cofactor.

The catalysed reaction is 4 porphobilinogen + H2O = hydroxymethylbilane + 4 NH4(+). It participates in porphyrin-containing compound metabolism; protoporphyrin-IX biosynthesis; coproporphyrinogen-III from 5-aminolevulinate: step 2/4. Its function is as follows. Tetrapolymerization of the monopyrrole PBG into the hydroxymethylbilane pre-uroporphyrinogen in several discrete steps. The sequence is that of Porphobilinogen deaminase from Bacillus mycoides (strain KBAB4) (Bacillus weihenstephanensis).